A 500-amino-acid chain; its full sequence is Cytochrome P450 71B37 (500 aa).

The helical transmembrane segment at 2–22 threads the bilayer; that stretch reads ATIWFLPLLFLSCLLLAALRL. Cys440 is a binding site for heme.

The protein belongs to the cytochrome P450 family. It depends on heme as a cofactor.

The protein localises to the membrane. This is Cytochrome P450 71B37 (CYP71B37) from Arabidopsis thaliana (Mouse-ear cress).